Here is a 357-residue protein sequence, read N- to C-terminus: MSNIEQLARANVRALTPYQSARRLGGNGDVWLNANEYPEAPAFQLTLQTLNRYPECQPVQVINRYAEYAGVQPEQVLVSRGADEGIELLIRAFCEPGKDAILFCPPTYGMYAVSAETFGVERRTAASKADWQLDLESIEAQLDGTKVIYVCSPNNPTGNLIAREDLRQLLTMAQGNALVVIDEAYIEFCPQATTAVWLDEFPHLVILRTLSKAFSLAGLRCGFTLANPEVIQLLLKVIAPYPLSTPVADIAAQALSREGIAKMKANVEEITSARRWLSDALKDIPCIEEVFPSESNYLLVRFTASPSVFKTLWDQGIILRDQNKQPSLAGCLRITIGNRYECERVVAALQSLPGINA.

Lys212 is modified (N6-(pyridoxal phosphate)lysine).

It belongs to the class-II pyridoxal-phosphate-dependent aminotransferase family. Histidinol-phosphate aminotransferase subfamily. In terms of assembly, homodimer. It depends on pyridoxal 5'-phosphate as a cofactor.

It carries out the reaction L-histidinol phosphate + 2-oxoglutarate = 3-(imidazol-4-yl)-2-oxopropyl phosphate + L-glutamate. Its pathway is amino-acid biosynthesis; L-histidine biosynthesis; L-histidine from 5-phospho-alpha-D-ribose 1-diphosphate: step 7/9. In Pectobacterium carotovorum subsp. carotovorum (strain PC1), this protein is Histidinol-phosphate aminotransferase.